Consider the following 236-residue polypeptide: Uridylate kinase (236 aa).

Residue 9–12 (KISG) participates in ATP binding. UMP is bound at residue Gly-51. ATP contacts are provided by Gly-52 and Arg-56. UMP is bound by residues Asp-71 and 132–139 (TGNSHFTT). Positions 166 and 169 each coordinate ATP.

This sequence belongs to the UMP kinase family. In terms of assembly, homohexamer.

The protein resides in the cytoplasm. It catalyses the reaction UMP + ATP = UDP + ADP. The protein operates within pyrimidine metabolism; CTP biosynthesis via de novo pathway; UDP from UMP (UMPK route): step 1/1. Its activity is regulated as follows. Inhibited by UTP. Its function is as follows. Catalyzes the reversible phosphorylation of UMP to UDP. The chain is Uridylate kinase from Mycoplasmoides gallisepticum (strain R(low / passage 15 / clone 2)) (Mycoplasma gallisepticum).